The sequence spans 77 residues: Neurotoxin LmNaTx21.1 (77 aa).

The first 7 residues, 1-7 (LILVACL), serve as a signal peptide directing secretion. The region spanning 16–76 (KDGYPVDWNN…VEIKGYGRCR (61 aa)) is the LCN-type CS-alpha/beta domain. Cystine bridges form between cysteine 26–cysteine 75, cysteine 30–cysteine 51, cysteine 37–cysteine 58, and cysteine 41–cysteine 60.

This sequence belongs to the long (4 C-C) scorpion toxin superfamily. Sodium channel inhibitor family. Alpha subfamily. As to expression, expressed by the venom gland.

The protein resides in the secreted. Functionally, binds voltage-independently at site-3 of voltage-gated sodium channels (Nav) and inhibits the inactivation of the activated channels, thereby blocking neuronal transmission. The sequence is that of Neurotoxin LmNaTx21.1 from Lychas mucronatus (Chinese swimming scorpion).